A 132-amino-acid chain; its full sequence is MLFGTYEHCMDAKQRLTLPAKLRNKLSNPIYLTKGFEADLEIWSKDDFLLQIKEHLNKISDQKDIRDLERIIWSNTVEIGIDNLGRIKIPYNLIQSLNIEKDVFILGLGNRLEIWSKNKYNQHKKELLKENS.

SpoVT-AbrB domains lie at 5–47 (TYEH…SKDD) and 76–119 (TVEI…SKNK).

Belongs to the MraZ family. Forms oligomers.

It is found in the cytoplasm. Its subcellular location is the nucleoid. This is Transcriptional regulator MraZ from Mycoplasma capricolum subsp. capricolum (strain California kid / ATCC 27343 / NCTC 10154).